The primary structure comprises 350 residues: tRNA N6-adenosine threonylcarbamoyltransferase (350 aa).

Fe cation-binding residues include His-117 and His-121. Substrate is bound by residues Leu-140–Gly-144, Asp-173, Gly-186, and Asn-277. Asp-305 contributes to the Fe cation binding site.

The protein belongs to the KAE1 / TsaD family. Fe(2+) is required as a cofactor.

It localises to the cytoplasm. The enzyme catalyses L-threonylcarbamoyladenylate + adenosine(37) in tRNA = N(6)-L-threonylcarbamoyladenosine(37) in tRNA + AMP + H(+). Its function is as follows. Required for the formation of a threonylcarbamoyl group on adenosine at position 37 (t(6)A37) in tRNAs that read codons beginning with adenine. Is involved in the transfer of the threonylcarbamoyl moiety of threonylcarbamoyl-AMP (TC-AMP) to the N6 group of A37, together with TsaE and TsaB. TsaD likely plays a direct catalytic role in this reaction. The polypeptide is tRNA N6-adenosine threonylcarbamoyltransferase (Novosphingobium aromaticivorans (strain ATCC 700278 / DSM 12444 / CCUG 56034 / CIP 105152 / NBRC 16084 / F199)).